The following is a 306-amino-acid chain: Pantothenate kinase (306 aa).

90-97 (GSVAVGKS) contributes to the ATP binding site.

This sequence belongs to the prokaryotic pantothenate kinase family.

It localises to the cytoplasm. It catalyses the reaction (R)-pantothenate + ATP = (R)-4'-phosphopantothenate + ADP + H(+). The protein operates within cofactor biosynthesis; coenzyme A biosynthesis; CoA from (R)-pantothenate: step 1/5. The chain is Pantothenate kinase from Listeria monocytogenes serotype 4a (strain HCC23).